Reading from the N-terminus, the 275-residue chain is MPELPEVEVTRRGIAPFVAGRRVERVDVRTAMLRWPVPAGLAEQLRAREVLAVERRGKYLLFEVDAGWFIVHLGMTGTLRVLPAGGVPVAAKHDHIDWIFDEFVLRFRDPRRFGAVLWHSREAGDVHAHPLLASLGVEPFSPAFDGALLHRRTRGRTVSVKQALLAGDIVVGVGNIYASESLFRAGIRPTTAAGKVSLPRYERLAEAVRATLADAIDRGGSTLRDFVGSNGESGYFQLDCFVYDRAGEPCRVCGTPIRQIVQGQRSTYFCPTCQR.

The active-site Schiff-base intermediate with DNA is Pro-2. The active-site Proton donor is Glu-3. Lys-58 functions as the Proton donor; for beta-elimination activity in the catalytic mechanism. Residues His-93, Arg-111, and Arg-156 each contribute to the DNA site. The FPG-type zinc finger occupies 241–275; it reads FVYDRAGEPCRVCGTPIRQIVQGQRSTYFCPTCQR. Arg-265 (proton donor; for delta-elimination activity) is an active-site residue.

The protein belongs to the FPG family. Monomer. The cofactor is Zn(2+).

The catalysed reaction is Hydrolysis of DNA containing ring-opened 7-methylguanine residues, releasing 2,6-diamino-4-hydroxy-5-(N-methyl)formamidopyrimidine.. The enzyme catalyses 2'-deoxyribonucleotide-(2'-deoxyribose 5'-phosphate)-2'-deoxyribonucleotide-DNA = a 3'-end 2'-deoxyribonucleotide-(2,3-dehydro-2,3-deoxyribose 5'-phosphate)-DNA + a 5'-end 5'-phospho-2'-deoxyribonucleoside-DNA + H(+). Involved in base excision repair of DNA damaged by oxidation or by mutagenic agents. Acts as a DNA glycosylase that recognizes and removes damaged bases. Has a preference for oxidized purines, such as 7,8-dihydro-8-oxoguanine (8-oxoG). Has AP (apurinic/apyrimidinic) lyase activity and introduces nicks in the DNA strand. Cleaves the DNA backbone by beta-delta elimination to generate a single-strand break at the site of the removed base with both 3'- and 5'-phosphates. This chain is Formamidopyrimidine-DNA glycosylase, found in Burkholderia multivorans (strain ATCC 17616 / 249).